A 272-amino-acid polypeptide reads, in one-letter code: Tryptophan synthase alpha chain (272 aa).

Catalysis depends on proton acceptor residues Glu49 and Asp60.

Belongs to the TrpA family. Tetramer of two alpha and two beta chains.

The catalysed reaction is (1S,2R)-1-C-(indol-3-yl)glycerol 3-phosphate + L-serine = D-glyceraldehyde 3-phosphate + L-tryptophan + H2O. It functions in the pathway amino-acid biosynthesis; L-tryptophan biosynthesis; L-tryptophan from chorismate: step 5/5. In terms of biological role, the alpha subunit is responsible for the aldol cleavage of indoleglycerol phosphate to indole and glyceraldehyde 3-phosphate. This Psychrobacter cryohalolentis (strain ATCC BAA-1226 / DSM 17306 / VKM B-2378 / K5) protein is Tryptophan synthase alpha chain.